The sequence spans 224 residues: MECRDMELADDYQSPFDFDSGVNKNYLYLSPSGNTSPPGSPTQNVGLLKTEPVAEEGEDAVTMLSAPEALTEEEQEELRRELTKVEEEIQTLSQVLAAKEKHLAELKRKLGISSLQEFKQNIAKGWQDVTATNAYKKTSETLSQAGQKASAAFSSVGSVITKKLEDVKNSPTFKSFEEKVENLKSKVGGAKPAGGDFGEVLNSTANATSTMTTEPPPEQMTESP.

Residues 29-53 (LSPSGNTSPPGSPTQNVGLLKTEPV) form a disordered region. Threonine 35 is modified (phosphothreonine). Phosphoserine is present on residues serine 36 and serine 40. Residues 61-113 (VTMLSAPEALTEEEQEELRRELTKVEEEIQTLSQVLAAKEKHLAELKRKLGIS) adopt a coiled-coil conformation. Threonine 138, serine 175, and serine 223 each carry phosphoserine. The segment at 186–224 (KVGGAKPAGGDFGEVLNSTANATSTMTTEPPPEQMTESP) is disordered. Over residues 202-224 (NSTANATSTMTTEPPPEQMTESP) the composition is skewed to low complexity.

This sequence belongs to the TPD52 family. As to quaternary structure, forms a homodimer or heterodimer with other members of the family. In terms of tissue distribution, isoform 2 is expressed at higher levels in kidney and brain than in liver, lung, testis and heart. Within the brain, isoform 2 is highly expressed in the granular layer of the cerebellum, the cortex and the hippocampus. In embryos, isoform 2 is expressed in the epithelium of the developing intestine, stomach, olfactory epithelium, neuronal layers of the retina, salivary gland, kidney and dorsal root ganglion.

The sequence is that of Tumor protein D52 (Tpd52) from Mus musculus (Mouse).